The sequence spans 475 residues: 3-isopropylmalate dehydratase large subunit (475 aa).

The [4Fe-4S] cluster site is built by C349, C409, and C412.

This sequence belongs to the aconitase/IPM isomerase family. LeuC type 1 subfamily. Heterodimer of LeuC and LeuD. Requires [4Fe-4S] cluster as cofactor.

It carries out the reaction (2R,3S)-3-isopropylmalate = (2S)-2-isopropylmalate. It functions in the pathway amino-acid biosynthesis; L-leucine biosynthesis; L-leucine from 3-methyl-2-oxobutanoate: step 2/4. In terms of biological role, catalyzes the isomerization between 2-isopropylmalate and 3-isopropylmalate, via the formation of 2-isopropylmaleate. The polypeptide is 3-isopropylmalate dehydratase large subunit (Cereibacter sphaeroides (strain ATCC 17029 / ATH 2.4.9) (Rhodobacter sphaeroides)).